The sequence spans 855 residues: Cell surface glycoprotein (855 aa).

An N-terminal signal peptide occupies residues 1–22 (MTANKQVRAVLLAALMVFSVFA). N-linked (GlcNAc...) asparagine glycosylation is found at N78, N83, N108, N167, N174, N187, N203, N227, N230, N313, N363, N441, N548, N588, N608, N620, N642, N656, and N754. A compositionally biased stretch (low complexity) spans 782 to 802 (ETTTAAETTTTEESTETTTTE). The tract at residues 782–831 (ETTTAAETTTTEESTETTTTEESTEEPTETATATEEPTEEATEETTESST) is disordered. Residues 817–827 (EPTEEATEETT) are compositionally biased toward acidic residues. Residues 831–851 (TPGFGVVVALVALVAAALLAV) traverse the membrane as a helical segment. The PGF sorting signal signature appears at 832–834 (PGF).

Belongs to the halobacterial S-layer protein family. In terms of processing, glycosylated. Post-translationally, cleaved by the archaeosortase ArtA at the C-terminus, with removal of a short hydrophobic segment. Lipidation.

The protein localises to the secreted. Its subcellular location is the cell wall. The protein resides in the S-layer. It localises to the cell membrane. Functionally, S-layer protein. The S-layer is a paracrystalline mono-layered assembly of proteins which coats the surface of the cell. This Haloferax gibbonsii protein is Cell surface glycoprotein.